The primary structure comprises 460 residues: Rab-3A-interacting protein (460 aa).

6 positions are modified to phosphoserine: Ser147, Ser149, Ser247, Ser250, Ser272, and Ser280. The stretch at 149–244 (SVLEVREKGY…EVAALKTLVL (96 aa)) forms a coiled coil. The interval 246–280 (SSPTSPTQEPLAAGKTPFKRGHTRNKSTSSAMSGS) is disordered. Polar residues predominate over residues 271–280 (KSTSSAMSGS).

This sequence belongs to the SEC2 family. Homodimer. Interacts with the N-terminal region of SSX2. Interacts with the GDP-bound forms of RAB8A and RAB8B. The interaction with RAB8A is prevented by phosphorylation of RAB8A at 'Thr-72'. Interacts with the GDP-bound forms of RAB3A and RAB3D. Interacts with DCDC1. Interacts (via the N-terminal region) with TRAPPC14; this interaction mediates RAB3IP association with the TRAPP II complex. Forms a heterotetramer with RAB11A where RAB3IP homodimer binds two RAB11A subunits. Forms a complex with RAB11A and RAB11FIP3, probably a heterohexamer with two of each protein subunit, where Rabin8/RAB3IP and RAB11FIP3 simultaneously bind to RAB11A; the complex promotes preciliary trafficking. Forms a complex containing RAB11A, ASAP1, RAB3IP, RAP11FIP3 and ARF4; the complex promotes preciliary trafficking; the complex binds to RHO in photoreceptor cells and promotes RHO ciliary transport. In terms of tissue distribution, ubiquitously expressed. Expressed at highest level in testis.

The protein localises to the cytoplasm. It is found in the nucleus. The protein resides in the cytoskeleton. It localises to the cell projection. Its subcellular location is the lamellipodium. Its function is as follows. Guanine nucleotide exchange factor (GEF) which may activate RAB8A and RAB8B. Promotes the exchange of GDP to GTP, converting inactive GDP-bound Rab proteins into their active GTP-bound form. Mediates the release of GDP from RAB8A and RAB8B but not from RAB3A or RAB5. Modulates actin organization and promotes polarized transport of RAB8A-specific vesicles to the cell surface. Together with RAB11A, RAB8A, the exocyst complex, PARD3, PRKCI, ANXA2, CDC42 and DNMBP promotes transcytosis of PODXL to the apical membrane initiation sites (AMIS), apical surface formation and lumenogenesis. Together with RAB11A and FIP3/RAB11FIP3, parts of the ciliary targeting complex that promotes preciliary vesicle trafficking to mother centriole and ciliogenesis initiation. Part of the ciliary targeting complex containing Rab11, ASAP1, RAB3IP and RAB11FIP3 and ARF4 that promotes RAB3IP preciliary vesicle trafficking to mother centriole and ciliogenesis initiation. This chain is Rab-3A-interacting protein (Rab3ip), found in Rattus norvegicus (Rat).